A 456-amino-acid chain; its full sequence is Molybdate transporter 1 (456 aa).

Transmembrane regions (helical) follow at residues 67–87 (LIFT…PMPV), 110–130 (IMAA…SGLM), 133–153 (VFNI…GLAF), 177–197 (PWLG…IVLV), 225–245 (VIAN…LAFI), 309–329 (AASV…FGAM), 354–374 (LLGV…VGIL), 377–397 (FPVG…AMAA), and 417–437 (LGSN…VLWM).

The protein belongs to the SLC26A/SulP transporter (TC 2.A.53) family. As to expression, strongly expressed in roots. Detected in the vascular tissues of hypocotyls, in petioles and vascular tissues of cotyledons and leaves, in mesophyll cells, stamen, sepals and siliques.

The protein localises to the cell membrane. Its subcellular location is the endomembrane system. It is found in the mitochondrion membrane. Its activity is regulated as follows. Not inhibited by sulfate. Functionally, high affinity molybdate transporter. Unable to transport sulfate. This Arabidopsis thaliana (Mouse-ear cress) protein is Molybdate transporter 1 (MOT1).